Consider the following 329-residue polypeptide: Delta-aminolevulinic acid dehydratase (329 aa).

Catalysis depends on K202, which acts as the Schiff-base intermediate with substrate. Residues R212 and R223 each contribute to the 5-aminolevulinate site. A Mg(2+)-binding site is contributed by E239. The Schiff-base intermediate with substrate role is filled by K254. S280 and Y319 together coordinate 5-aminolevulinate.

The protein belongs to the ALAD family. As to quaternary structure, homooctamer.

It catalyses the reaction 2 5-aminolevulinate = porphobilinogen + 2 H2O + H(+). The protein operates within porphyrin-containing compound metabolism; protoporphyrin-IX biosynthesis; coproporphyrinogen-III from 5-aminolevulinate: step 1/4. Catalyzes an early step in the biosynthesis of tetrapyrroles. Binds two molecules of 5-aminolevulinate per subunit, each at a distinct site, and catalyzes their condensation to form porphobilinogen. The sequence is that of Delta-aminolevulinic acid dehydratase (hemB) from Mycobacterium tuberculosis (strain CDC 1551 / Oshkosh).